Here is a 307-residue protein sequence, read N- to C-terminus: MIKDKHLIDPMDFTVEELEEIFKLAHEIILDPEKFSHVCEGKILGTLFYEPSTRTRFSFEAAMMRLGGKILGFSEPNSSSASKGESLSDTIKMVSIYTDIIAMRHPKEGSAKVASLYSSVPIINAGDGGHQHPTQTLTDLLTIEMLKDGLSNHTIGICGDLKYGRTVHSLIKAMSRYKGNKFLLISPKELRIPDYIREEILRKNNIEFLEVETLEEVIDKVDILYMTRIQKERFFNEEEYLRLRDSYILNKEKMNLAKSDMIVMHPLPRVNEIACEVDYDKRAAYFKQAEYGMYARMALMAKLLGVL.

Carbamoyl phosphate-binding residues include R54 and T55. An L-aspartate-binding site is contributed by K83. Carbamoyl phosphate-binding residues include R104, H132, and Q135. L-aspartate is bound by residues R165 and R228. Carbamoyl phosphate-binding residues include L267 and P268.

This sequence belongs to the aspartate/ornithine carbamoyltransferase superfamily. ATCase family. As to quaternary structure, heterododecamer (2C3:3R2) of six catalytic PyrB chains organized as two trimers (C3), and six regulatory PyrI chains organized as three dimers (R2).

The catalysed reaction is carbamoyl phosphate + L-aspartate = N-carbamoyl-L-aspartate + phosphate + H(+). The protein operates within pyrimidine metabolism; UMP biosynthesis via de novo pathway; (S)-dihydroorotate from bicarbonate: step 2/3. In terms of biological role, catalyzes the condensation of carbamoyl phosphate and aspartate to form carbamoyl aspartate and inorganic phosphate, the committed step in the de novo pyrimidine nucleotide biosynthesis pathway. In Clostridium botulinum (strain Eklund 17B / Type B), this protein is Aspartate carbamoyltransferase catalytic subunit.